The chain runs to 504 residues: Histidine ammonia-lyase (504 aa).

Positions 142 to 144 (ASG) form a cross-link, 5-imidazolinone (Ala-Gly). Ser-143 bears the 2,3-didehydroalanine (Ser) mark.

Belongs to the PAL/histidase family. Post-translationally, contains an active site 4-methylidene-imidazol-5-one (MIO), which is formed autocatalytically by cyclization and dehydration of residues Ala-Ser-Gly.

The protein localises to the cytoplasm. It catalyses the reaction L-histidine = trans-urocanate + NH4(+). It functions in the pathway amino-acid degradation; L-histidine degradation into L-glutamate; N-formimidoyl-L-glutamate from L-histidine: step 1/3. This chain is Histidine ammonia-lyase, found in Staphylococcus aureus (strain JH1).